A 293-amino-acid chain; its full sequence is Formamidopyrimidine-DNA glycosylase (293 aa).

The Schiff-base intermediate with DNA role is filled by Pro-2. The Proton donor role is filled by Glu-3. The active-site Proton donor; for beta-elimination activity is the Lys-58. DNA is bound by residues His-104, Arg-123, and Lys-166. The FPG-type zinc-finger motif lies at 257–293 (AAYDREGERCRTDGCGGAVKRFVQNGRSTFWCSGCQK). The active-site Proton donor; for delta-elimination activity is the Arg-283.

This sequence belongs to the FPG family. As to quaternary structure, monomer. The cofactor is Zn(2+).

The enzyme catalyses Hydrolysis of DNA containing ring-opened 7-methylguanine residues, releasing 2,6-diamino-4-hydroxy-5-(N-methyl)formamidopyrimidine.. The catalysed reaction is 2'-deoxyribonucleotide-(2'-deoxyribose 5'-phosphate)-2'-deoxyribonucleotide-DNA = a 3'-end 2'-deoxyribonucleotide-(2,3-dehydro-2,3-deoxyribose 5'-phosphate)-DNA + a 5'-end 5'-phospho-2'-deoxyribonucleoside-DNA + H(+). Functionally, involved in base excision repair of DNA damaged by oxidation or by mutagenic agents. Acts as a DNA glycosylase that recognizes and removes damaged bases. Has a preference for oxidized purines, such as 7,8-dihydro-8-oxoguanine (8-oxoG). Has AP (apurinic/apyrimidinic) lyase activity and introduces nicks in the DNA strand. Cleaves the DNA backbone by beta-delta elimination to generate a single-strand break at the site of the removed base with both 3'- and 5'-phosphates. This chain is Formamidopyrimidine-DNA glycosylase, found in Rhodopseudomonas palustris (strain BisB5).